Consider the following 212-residue polypeptide: Large ribosomal subunit protein uL3 (212 aa).

Residues 130 to 158 (KRGSMTHGSKNHRLPGSTGAGTTPGRVYP) form a disordered region.

This sequence belongs to the universal ribosomal protein uL3 family. As to quaternary structure, part of the 50S ribosomal subunit. Forms a cluster with proteins L14 and L19.

One of the primary rRNA binding proteins, it binds directly near the 3'-end of the 23S rRNA, where it nucleates assembly of the 50S subunit. This is Large ribosomal subunit protein uL3 from Gloeothece citriformis (strain PCC 7424) (Cyanothece sp. (strain PCC 7424)).